A 212-amino-acid chain; its full sequence is ATP-dependent Clp protease proteolytic subunit (212 aa).

The active-site Nucleophile is the Ser-114. The active site involves His-139.

The protein belongs to the peptidase S14 family. In terms of assembly, fourteen ClpP subunits assemble into 2 heptameric rings which stack back to back to give a disk-like structure with a central cavity, resembling the structure of eukaryotic proteasomes.

The protein localises to the cytoplasm. It carries out the reaction Hydrolysis of proteins to small peptides in the presence of ATP and magnesium. alpha-casein is the usual test substrate. In the absence of ATP, only oligopeptides shorter than five residues are hydrolyzed (such as succinyl-Leu-Tyr-|-NHMec, and Leu-Tyr-Leu-|-Tyr-Trp, in which cleavage of the -Tyr-|-Leu- and -Tyr-|-Trp bonds also occurs).. In terms of biological role, cleaves peptides in various proteins in a process that requires ATP hydrolysis. Has a chymotrypsin-like activity. Plays a major role in the degradation of misfolded proteins. This chain is ATP-dependent Clp protease proteolytic subunit, found in Aromatoleum aromaticum (strain DSM 19018 / LMG 30748 / EbN1) (Azoarcus sp. (strain EbN1)).